A 985-amino-acid polypeptide reads, in one-letter code: Regulator of telomere elongation helicase 1 homolog (985 aa).

The Helicase ATP-binding domain maps to 7 to 303 (AGIPVHFPFE…QDMAGDEPKD (297 aa)). 42 to 49 (SPTGTGKT) is an ATP binding site. 4 residues coordinate [4Fe-4S] cluster: cysteine 146, cysteine 164, cysteine 173, and cysteine 209. Residues 252-255 (DEAH) carry the DEAH box motif. Threonine 874 bears the Phosphothreonine mark.

Belongs to the helicase family. RAD3/XPD subfamily.

The protein localises to the nucleus. It catalyses the reaction ATP + H2O = ADP + phosphate + H(+). Its function is as follows. A probable ATP-dependent DNA helicase implicated in DNA repair and the maintenance of genomic stability. Acts as an anti-recombinase to counteract toxic recombination and limit crossover during meiosis. Regulates meiotic recombination and crossover homeostasis by physically dissociating strand invasion events and thereby promotes noncrossover repair by meiotic synthesis dependent strand annealing (SDSA) as well as disassembly of D loop recombination intermediates. This chain is Regulator of telomere elongation helicase 1 homolog, found in Drosophila erecta (Fruit fly).